The following is a 287-amino-acid chain: Protease HtpX (287 aa).

A run of 2 helical transmembrane segments spans residues 4–24 (VLLF…VFNI) and 37–57 (VGLL…SLWI). Zn(2+) is bound at residue histidine 143. The active site involves glutamate 144. Histidine 147 provides a ligand contact to Zn(2+). Transmembrane regions (helical) follow at residues 158–178 (LIQG…ASAI) and 194–214 (GVVM…VMWF). Glutamate 219 contributes to the Zn(2+) binding site.

This sequence belongs to the peptidase M48B family. It depends on Zn(2+) as a cofactor.

The protein resides in the cell inner membrane. This Idiomarina loihiensis (strain ATCC BAA-735 / DSM 15497 / L2-TR) protein is Protease HtpX.